Consider the following 301-residue polypeptide: 4-hydroxy-tetrahydrodipicolinate synthase (301 aa).

Thr-46 is a binding site for pyruvate. Residue Tyr-134 is the Proton donor/acceptor of the active site. Catalysis depends on Lys-162, which acts as the Schiff-base intermediate with substrate. Ile-203 lines the pyruvate pocket.

Belongs to the DapA family. As to quaternary structure, homotetramer; dimer of dimers.

The protein localises to the cytoplasm. It catalyses the reaction L-aspartate 4-semialdehyde + pyruvate = (2S,4S)-4-hydroxy-2,3,4,5-tetrahydrodipicolinate + H2O + H(+). Its pathway is amino-acid biosynthesis; L-lysine biosynthesis via DAP pathway; (S)-tetrahydrodipicolinate from L-aspartate: step 3/4. Functionally, catalyzes the condensation of (S)-aspartate-beta-semialdehyde [(S)-ASA] and pyruvate to 4-hydroxy-tetrahydrodipicolinate (HTPA). The chain is 4-hydroxy-tetrahydrodipicolinate synthase from Anaplasma marginale (strain Florida).